Reading from the N-terminus, the 181-residue chain is Putative manganese efflux pump MntP (181 aa).

The next 6 membrane-spanning stretches (helical) occupy residues 4–24 (VVLLALALSMDAFAVSIGLGA), 31–51 (VVLGLKAALYFGVFQALMPLI), 59–79 (MLGWLASFAPWVAAGLLALIA), 102–122 (VLLLLAIATSIDALAAGFALT), 129–149 (LVSCALIGVITAIFSFAGVFI), and 161–181 (AELAGGLVLLLIALKIIAVAV).

Belongs to the MntP (TC 9.B.29) family.

The protein localises to the cell inner membrane. Functionally, probably functions as a manganese efflux pump. In Saccharophagus degradans (strain 2-40 / ATCC 43961 / DSM 17024), this protein is Putative manganese efflux pump MntP.